Consider the following 341-residue polypeptide: GTPase Obg (341 aa).

In terms of domain architecture, Obg spans 1–159 (MKFLDQAKVY…RAIWLRLKLI (159 aa)). One can recognise an OBG-type G domain in the interval 160-327 (ADAGLVGLPN…VLRAGAHIIE (168 aa)). GTP-binding positions include 166–173 (GLPNAGKS), 191–195 (FTTLH), 212–215 (DIPG), 279–282 (SQID), and 308–310 (SAV). The Mg(2+) site is built by S173 and T193.

It belongs to the TRAFAC class OBG-HflX-like GTPase superfamily. OBG GTPase family. In terms of assembly, monomer. Mg(2+) serves as cofactor.

The protein resides in the cytoplasm. Functionally, an essential GTPase which binds GTP, GDP and possibly (p)ppGpp with moderate affinity, with high nucleotide exchange rates and a fairly low GTP hydrolysis rate. Plays a role in control of the cell cycle, stress response, ribosome biogenesis and in those bacteria that undergo differentiation, in morphogenesis control. This Bartonella tribocorum (strain CIP 105476 / IBS 506) protein is GTPase Obg.